A 490-amino-acid polypeptide reads, in one-letter code: Katanin p60 ATPase-containing subunit A-like 1 (490 aa).

Position 1 is an N-acetylmethionine (Met-1). The interval 95 to 178 (DPAVWPPPVP…MQDGASDGDI (84 aa)) is disordered. Residues 116–127 (PNREVRPLRKDV) show a composition bias toward basic and acidic residues. Positions 128 to 139 (AGVGARGPVGRA) are enriched in low complexity. Residues 143 to 169 (SKSEKPSTNKDKDYRARGRDDKGRKNM) show a composition bias toward basic and acidic residues. Residue Ser-174 is modified to Phosphoserine. 248-255 (GPPGTGKT) provides a ligand contact to ATP.

Belongs to the AAA ATPase family. Katanin p60 subunit A1 subfamily. A-like 1 sub-subfamily. As to quaternary structure, interacts with KATNB1 and KATNBL1.

The protein resides in the cytoplasm. The protein localises to the cytoskeleton. It localises to the spindle pole. It is found in the spindle. It carries out the reaction n ATP + n H2O + a microtubule = n ADP + n phosphate + (n+1) alpha/beta tubulin heterodimers.. Its function is as follows. Regulates microtubule dynamics in Sertoli cells, a process that is essential for spermiogenesis and male fertility. Severs microtubules in an ATP-dependent manner, promoting rapid reorganization of cellular microtubule arrays. Has microtubule-severing activity in vitro. This chain is Katanin p60 ATPase-containing subunit A-like 1, found in Sorex araneus (Eurasian common shrew).